We begin with the raw amino-acid sequence, 569 residues long: Cell death protein 4 (569 aa).

The CARD domain occupies M1 to L91. An NB-ARC domain is found at D116–I442. Residues F131, G162–V167, and Q171 each bind ATP. S166 contributes to the Mg(2+) binding site.

As to quaternary structure, associates as an asymmetric homodimer with ced-9. Upon release from ced-9, forms an octamer, known as the apoptosome, and interacts with ced-3; the interaction results in ced-3 autoproteolytic cleavage and activation. The octamer (a tetramer of an asymmetric dimer) also interacts with two processed ced-3 to form a stable holoenzyme. Interacts with sex-determining protein fem-1. May form a complex composed of ced-3, ced-4 and mac-1 or of ced-9, ced-4 and mac-1. Within the complex, interacts with ced-4.

Its subcellular location is the mitochondrion. The protein localises to the cytoplasm. It localises to the perinuclear region. In terms of biological role, plays a major role in programmed cell death (PCD, apoptosis). egl-1 binds to and directly inhibits the activity of ced-9, releasing the cell death activator ced-4 from a ced-9/ced-4 containing protein complex and allowing ced-4 to induce caspase ced-3 autoproteolytic cleavage and activation. Also forms a holoenzyme with processed ced-3 enhancing ced-3 activity. Component of the egl-1, ced-9, ced-4 and ced-3 apoptotic signaling cascade required for the initiation of programmed cell death in cells fated to die during embryonic and postembryonic development. During oogenesis, required for germline apoptosis downstream of ced-9 and upstream of ced-3 but independently of egl-1. May regulate germline apoptosis in response to DNA damage, probably downstream of let-60/ras and mpk-1 pathway. Regulates CEP neuron apoptosis in response to high Al(3+) levels. During male tail morphogenesis, promotes apoptosis of the tail-spike cell. During larval development, required for the elimination of transient presynaptic components downstream of egl-1 and ced-9 and upstream of ced-3 apoptotic pathway. Together with ain-1, a component of the miRNA-induced-silencing complex (miRISC), and probably upstream of ced-3, regulates temporal cell fate patterning during larval development. May play a role in resistance to S.typhimurium-mediated infection. In Caenorhabditis briggsae, this protein is Cell death protein 4.